Reading from the N-terminus, the 165-residue chain is Cyclic pyranopterin monophosphate synthase (165 aa).

Residues 76–78 and 114–115 each bind substrate; these read LCH and ME. The active site involves D129.

Belongs to the MoaC family. Homohexamer; trimer of dimers.

The catalysed reaction is (8S)-3',8-cyclo-7,8-dihydroguanosine 5'-triphosphate = cyclic pyranopterin phosphate + diphosphate. It functions in the pathway cofactor biosynthesis; molybdopterin biosynthesis. Its function is as follows. Catalyzes the conversion of (8S)-3',8-cyclo-7,8-dihydroguanosine 5'-triphosphate to cyclic pyranopterin monophosphate (cPMP). The chain is Cyclic pyranopterin monophosphate synthase from Brucella abortus (strain 2308).